Consider the following 250-residue polypeptide: MSVTPSIDAVRDLRAASCGPVGAPSVTSDLSENIILTSLDDLHNWARLSSLWPLLYGTACCFIEFAALIGSRFDFDRFGLVPRSSPRQADLLIVAGTVTMKMAPALVRLYEQMPEPKYVIAMGACTITGGMFSADSTTAVRGVDKLIPVDLYLPGCPPRPEAIFDAVIKLRKKVGDESVAERIKIAQTHRYFTVPHHMKRVEPIVTGAYLSADTQKAALKPGAGLPMAAELNTPEIDVSPASQSSSTYES.

4 residues coordinate [4Fe-4S] cluster: Cys60, Cys61, Cys125, and Cys156. The segment at 230–250 (ELNTPEIDVSPASQSSSTYES) is disordered. Polar residues predominate over residues 240-250 (PASQSSSTYES).

The protein belongs to the complex I 20 kDa subunit family. As to quaternary structure, NDH-1 can be composed of about 15 different subunits; different subcomplexes with different compositions have been identified which probably have different functions. [4Fe-4S] cluster is required as a cofactor.

The protein resides in the cellular thylakoid membrane. It carries out the reaction a plastoquinone + NADH + (n+1) H(+)(in) = a plastoquinol + NAD(+) + n H(+)(out). The enzyme catalyses a plastoquinone + NADPH + (n+1) H(+)(in) = a plastoquinol + NADP(+) + n H(+)(out). NDH-1 shuttles electrons from an unknown electron donor, via FMN and iron-sulfur (Fe-S) centers, to quinones in the respiratory and/or the photosynthetic chain. The immediate electron acceptor for the enzyme in this species is believed to be plastoquinone. Couples the redox reaction to proton translocation, and thus conserves the redox energy in a proton gradient. Cyanobacterial NDH-1 also plays a role in inorganic carbon-concentration. The polypeptide is NAD(P)H-quinone oxidoreductase subunit K (Prochlorococcus marinus (strain MIT 9313)).